A 304-amino-acid chain; its full sequence is Non-structural maintenance of chromosomes element 3 homolog (304 aa).

Disordered stretches follow at residues 1-82 and 285-304; these read MLQK…PRSQ and ALAD…APSS. Residues 32–43 show a composition bias toward basic and acidic residues; that stretch reads AGEDARVLRDGF. 3 positions are modified to phosphoserine: Ser57, Ser60, and Ser64. The segment covering 60 to 80 has biased composition (low complexity); the sequence is SQGPSPQGARRAQAAPAVGPR. Residues 78-304 are interaction with NSMCE1; the sequence is GPRSQKQLEL…PQPSGPAPSS (227 aa). Positions 85-285 constitute an MAGE domain; that stretch reads LELKVSELVQ…KDWPAQYCEA (201 aa).

Component of the SMC5-SMC6 complex which consists at least of SMC5, SMC6, NSMCE2, NSMCE1, NSMCE4A or EID3 and NSMCE3. NSMCE1, NSMCE4A or EID3 and NSMCE3 probably form a subcomplex that bridges the head domains of the SMC5:SMC6 heterodimer. Interacts with PJA1. Interacts with E2F1 (via C-terminus). Interacts with NGFR (via C-terminus). Interacts with NSMCE1. Interacts with NSMCE4. Interacts with SMC6. Interacts with EID3. In terms of tissue distribution, ubiquitous.

It localises to the cytoplasm. It is found in the nucleus. The protein resides in the chromosome. The protein localises to the telomere. Its function is as follows. Component of the SMC5-SMC6 complex, a complex involved in repair of DNA double-strand breaks by homologous recombination. The complex may promote sister chromatid homologous recombination by recruiting the SMC1-SMC3 cohesin complex to double-strand breaks. The complex is required for telomere maintenance via recombination in ALT (alternative lengthening of telomeres) cell lines and mediates sumoylation of shelterin complex (telosome) components which is proposed to lead to shelterin complex disassembly in ALT-associated PML bodies (APBs). In vitro enhances ubiquitin ligase activity of NSMCE1. Proposed to act through recruitment and/or stabilization of the Ubl-conjugating enzyme (E2) at the E3:substrate complex. May be a growth suppressor that facilitates the entry of the cell into cell cycle arrest. The chain is Non-structural maintenance of chromosomes element 3 homolog from Homo sapiens (Human).